The sequence spans 1074 residues: Calcium-transporting ATPase 8, plasma membrane-type (1074 aa).

The disordered stretch occupies residues 1 to 33; it reads MTSLLKSSPGRRRGGDVESGKSEHADSDSDTFY. At 1-180 the chain is on the cytoplasmic side; sequence MTSLLKSSPG…NTYPRKKGKG (180 aa). Residues 13–27 show a composition bias toward basic and acidic residues; that stretch reads RGGDVESGKSEHADS. Positions 43–54 are interaction with calmodulin; the sequence is RLQQWRKAALVL. A helical transmembrane segment spans residues 181–201; the sequence is FLRFLWDACHDLTLIILMVAA. The Extracellular segment spans residues 202–219; it reads VASLALGIKTEGIKEGWY. Residues 220-240 traverse the membrane as a helical segment; that stretch reads DGGSIAFAVILVIVVTAVSDY. At 241–369 the chain is on the cytoplasmic side; the sequence is KQSLQFQNLN…GEETPLQVRL (129 aa). The chain crosses the membrane as a helical span at residues 370-389; the sequence is NGVATFIGSIGLAVAAAVLV. The Extracellular portion of the chain corresponds to 390–426; the sequence is ILLTRYFTGHTKDNNGGPQFVKGKTKVGHVIDDVVKV. The chain crosses the membrane as a helical span at residues 427 to 444; sequence LTVAVTIVVVAVPEGLPL. Residues 445-840 lie on the Cytoplasmic side of the membrane; that stretch reads AVTLTLAYSM…RWGRSVYANI (396 aa). D482 acts as the 4-aspartylphosphate intermediate in catalysis. Mg(2+)-binding residues include D785 and D789. A helical membrane pass occupies residues 841-859; that stretch reads QKFIQFQLTVNVAALVINV. At 860–870 the chain is on the extracellular side; sequence VAAISSGDVPL. The chain crosses the membrane as a helical span at residues 871 to 891; that stretch reads TAVQLLWVNLIMDTLGALALA. Residues 892 to 911 lie on the Cytoplasmic side of the membrane; it reads TEPPTDHLMGRPPVGRKEPL. A helical transmembrane segment spans residues 912–934; the sequence is ITNIMWRNLLIQAIYQVSVLLTL. The Extracellular portion of the chain corresponds to 935 to 949; that stretch reads NFRGISILGLEHEVH. Residues 950 to 971 traverse the membrane as a helical segment; it reads EHATRVKNTIIFNAFVLCQAFN. Topologically, residues 972 to 989 are cytoplasmic; the sequence is EFNARKPDEKNIFKGVIK. The helical transmembrane segment at 990–1011 threads the bilayer; the sequence is NRLFMGIIVITLVLQVIIVEFL. The Extracellular portion of the chain corresponds to 1012-1021; that stretch reads GKFASTTKLN. Residues 1022–1043 traverse the membrane as a helical segment; the sequence is WKQWLICVGIGVISWPLALVGK. At 1044-1074 the chain is on the cytoplasmic side; the sequence is FIPVPAAPISNKLKVLKFWGKKKNSSGEGSL.

This sequence belongs to the cation transport ATPase (P-type) (TC 3.A.3) family. Type IIB subfamily.

The protein resides in the cell membrane. The catalysed reaction is Ca(2+)(in) + ATP + H2O = Ca(2+)(out) + ADP + phosphate + H(+). With respect to regulation, activated by calmodulin. In terms of biological role, this magnesium-dependent enzyme catalyzes the hydrolysis of ATP coupled with the translocation of calcium from the cytosol out of the cell. In Arabidopsis thaliana (Mouse-ear cress), this protein is Calcium-transporting ATPase 8, plasma membrane-type (ACA8).